Reading from the N-terminus, the 463-residue chain is Phytase A (463 aa).

A signal peptide spans 1 to 19 (MAFFTVALSLYYLLSRVST). The N-linked (GlcNAc...) asparagine glycan is linked to Asn26. Cys29 and Cys38 are oxidised to a cystine. The N-linked (GlcNAc...) asparagine glycan is linked to Asn41. Residues Gln48, Tyr49, Arg79, His80, Arg83, and Thr86 each contribute to the 1D-myo-inositol hexakisphosphate site. Disulfide bonds link Cys69/Cys410, Cys211/Cys460, Cys260/Cys278, and Cys431/Cys439. Residue His80 is the Nucleophile of the active site. N-linked (GlcNAc...) asparagine glycosylation is found at Asn103 and Asn118. Arg163 provides a ligand contact to 1D-myo-inositol hexakisphosphate. N-linked (GlcNAc...) asparagine glycosylation is present at Asn203. Asp207 provides a ligand contact to 1D-myo-inositol hexakisphosphate. Asn226 is a glycosylation site (N-linked (GlcNAc...) asparagine). Residue Lys297 participates in 1D-myo-inositol hexakisphosphate binding. N-linked (GlcNAc...) asparagine glycans are attached at residues Asn331 and Asn335. The 1D-myo-inositol hexakisphosphate site is built by His357 and Asp358. An N-linked (GlcNAc...) asparagine glycan is attached at Asn372.

The protein belongs to the histidine acid phosphatase family. In terms of assembly, monomer. Post-translationally, seems to be cleaved into at least two pieces, most likely due to proteases in the supernatant. The N-terminal fragment, called phyB seems to retain phytase activity.

The protein localises to the secreted. It carries out the reaction 1D-myo-inositol hexakisphosphate + H2O = 1D-myo-inositol 1,2,4,5,6-pentakisphosphate + phosphate. It catalyses the reaction 1D-myo-inositol 1,2,4,5,6-pentakisphosphate + H2O = 1D-myo-inositol 1,2,5,6-tetrakisphosphate + phosphate. The catalysed reaction is 1D-myo-inositol 1,2,5,6-tetrakisphosphate + H2O = 1D-myo-inositol 1,2,6-trisphosphate + phosphate. The enzyme catalyses 1D-myo-inositol 1,2,6-trisphosphate + H2O = 1D-myo-inositol 1,2-bisphosphate + phosphate. It carries out the reaction 1D-myo-inositol 1,2-bisphosphate + H2O = 1D-myo-inositol 2-phosphate + phosphate. Functionally, catalyzes the phosphate monoester hydrolysis of phytic acid (myo-inositol hexakisphosphate), which results in the stepwise formation of myo-inositol pentakis-, tetrakis-, tris-, bis-, and monophosphates, as well as the liberation of inorganic phosphate. Myo-inositol 2-monophosphate is the end product. Has a broad substrate specificity and is also able to dephosphorylate other classic acid phosphatase substrates such as p-nitrophenyl phosphate, phenyl phosphate, fructose 1,6-bisphosphate, fructose 6-phosphate, glucose 6-phosphate, ribose 5-phosphate, alpha-glycerophosphate, beta-glycerophosphate, 3-phosphoglycerate, as well as ADP and ATP. In Emericella nidulans (strain FGSC A4 / ATCC 38163 / CBS 112.46 / NRRL 194 / M139) (Aspergillus nidulans), this protein is Phytase A.